The primary structure comprises 782 residues: LPS-assembly protein LptD (782 aa).

A signal peptide spans 1–24 (MKKNSYTRLSIAILSTLYSVSSLA).

Belongs to the LptD family. Component of the lipopolysaccharide transport and assembly complex. Interacts with LptE and LptA.

It is found in the cell outer membrane. Functionally, together with LptE, is involved in the assembly of lipopolysaccharide (LPS) at the surface of the outer membrane. The sequence is that of LPS-assembly protein LptD from Pasteurella multocida (strain Pm70).